Here is a 175-residue protein sequence, read N- to C-terminus: Ribosome-binding factor A (175 aa).

The tract at residues 129–175 is disordered; sequence GAKPAGEADPYRDRGSADEPSDAGGLVIRTSDGLEAENTGDDYQAED. The segment covering 162 to 175 has biased composition (acidic residues); sequence LEAENTGDDYQAED.

Belongs to the RbfA family. As to quaternary structure, monomer. Binds 30S ribosomal subunits, but not 50S ribosomal subunits or 70S ribosomes.

Its subcellular location is the cytoplasm. Its function is as follows. One of several proteins that assist in the late maturation steps of the functional core of the 30S ribosomal subunit. Associates with free 30S ribosomal subunits (but not with 30S subunits that are part of 70S ribosomes or polysomes). Required for efficient processing of 16S rRNA. May interact with the 5'-terminal helix region of 16S rRNA. The protein is Ribosome-binding factor A of Mycobacterium marinum (strain ATCC BAA-535 / M).